Reading from the N-terminus, the 259-residue chain is Dihydroorotate dehydrogenase B (NAD(+)), electron transfer subunit (259 aa).

Residues 2–102 (MQKQNMIVVN…LGPLGHGFPV (101 aa)) form the FAD-binding FR-type domain. FAD-binding positions include 53–56 (RPIS), 70–72 (LYR), and 77–78 (GT). [2Fe-2S] cluster-binding residues include C221, C226, C229, and C246.

Belongs to the PyrK family. Heterotetramer of 2 PyrK and 2 PyrD type B subunits. [2Fe-2S] cluster is required as a cofactor. Requires FAD as cofactor.

The protein operates within pyrimidine metabolism; UMP biosynthesis via de novo pathway; orotate from (S)-dihydroorotate (NAD(+) route): step 1/1. Its function is as follows. Responsible for channeling the electrons from the oxidation of dihydroorotate from the FMN redox center in the PyrD type B subunit to the ultimate electron acceptor NAD(+). The sequence is that of Dihydroorotate dehydrogenase B (NAD(+)), electron transfer subunit from Bacillus cereus (strain 03BB102).